A 427-amino-acid chain; its full sequence is Glutamate-1-semialdehyde 2,1-aminomutase (427 aa).

Position 265 is an N6-(pyridoxal phosphate)lysine (K265).

This sequence belongs to the class-III pyridoxal-phosphate-dependent aminotransferase family. HemL subfamily. Homodimer. It depends on pyridoxal 5'-phosphate as a cofactor.

It is found in the cytoplasm. It carries out the reaction (S)-4-amino-5-oxopentanoate = 5-aminolevulinate. It participates in porphyrin-containing compound metabolism; protoporphyrin-IX biosynthesis; 5-aminolevulinate from L-glutamyl-tRNA(Glu): step 2/2. The chain is Glutamate-1-semialdehyde 2,1-aminomutase from Burkholderia lata (strain ATCC 17760 / DSM 23089 / LMG 22485 / NCIMB 9086 / R18194 / 383).